The primary structure comprises 185 residues: Lipid A acyltransferase PagP (185 aa).

The first 24 residues, 1 to 24, serve as a signal peptide directing secretion; it reads MKTHNDILAALAALPLFLTGAAFA. Catalysis depends on residues His57, Asp100, and Ser101.

It belongs to the lipid A palmitoyltransferase family. In terms of assembly, homodimer.

Its subcellular location is the cell outer membrane. It carries out the reaction a lipid A + a 1,2-diacyl-sn-glycero-3-phosphocholine = a hepta-acyl lipid A + a 2-acyl-sn-glycero-3-phosphocholine. The catalysed reaction is a lipid IVA + a 1,2-diacyl-sn-glycero-3-phosphocholine = a lipid IVB + a 2-acyl-sn-glycero-3-phosphocholine. The enzyme catalyses a lipid IIA + a 1,2-diacyl-sn-glycero-3-phosphocholine = a lipid IIB + a 2-acyl-sn-glycero-3-phosphocholine. In terms of biological role, transfers a fatty acid residue from the sn-1 position of a phospholipid to the N-linked hydroxyfatty acid chain on the proximal unit of lipid A or its precursors. In Edwardsiella tarda (strain FL6-60), this protein is Lipid A acyltransferase PagP.